The sequence spans 1185 residues: Adhesion G-protein coupled receptor G6 (1185 aa).

The N-terminal stretch at 1–32 (MISFISGRWWRWKFQNTLAVFLLLICLSTSVA) is a signal peptide. At 33–849 (QSCQSSTSCN…AELIDEKNNR (817 aa)) the chain is on the extracellular side. Cys41 and Cys67 are joined by a disulfide. The CUB domain occupies 41-149 (CNVVLTDSQG…KGFHISYKQV (109 aa)). The mediates interaction with type IV collagen stretch occupies residues 41-354 (CNVVLTDSQG…SSTQTDSTLS (314 aa)). Positions 41–839 (CNVVLTDSQG…FGILMDVSRA (799 aa)) are inhibits receptor signaling in absence of type IV collagen. Asn68 carries an N-linked (GlcNAc...) asparagine glycan. 2 residues coordinate Ca(2+): Glu89 and Asp97. Cysteines 94 and 111 form a disulfide. Asn121 carries an N-linked (GlcNAc...) asparagine glycan. Positions 134, 136, and 137 each coordinate Ca(2+). The 202-residue stretch at 154–355 (RNQKVTMPKS…STQTDSTLSC (202 aa)) folds into the Pentraxin (PTX) domain. Intrachain disulfides connect Cys185–Cys248, Cys229–Cys271, and Cys369–Cys375. Asn395, Asn429, Asn470, Asn539, Asn550, Asn562, Asn565, Asn613, Asn680, Asn691, Asn719, Asn763, Asn799, and Asn818 each carry an N-linked (GlcNAc...) asparagine glycan. 2 disulfide bridges follow: Cys508-Cys544 and Cys532-Cys563. The region spanning 658–840 (PSLTISSKNL…GILMDVSRAA (183 aa)) is the GAIN-B domain. Intrachain disulfides connect Cys790/Cys822 and Cys809/Cys824. The tract at residues 790 to 840 (CVFWDFNLQNYSGGCNSDGCKVGSDSNSNRTVCLCNHLTHFGILMDVSRAA) is GPS. Positions 829–837 (HFGILMDVS) are stachel. Residues 850–870 (VLTFITYIGCGISAIFSAATL) traverse the membrane as a helical segment. Residues 871 to 886 (LTYIAFEKLRRDYPSK) lie on the Cytoplasmic side of the membrane. The helical transmembrane segment at 887-907 (ILMNLSTSLLFLNMVFLLDGW) threads the bilayer. Residues 908 to 915 (LASYEIKE) are Extracellular-facing. Residues 916-936 (LCVTVAVFLHFFLLTSFTWMG) form a helical membrane-spanning segment. At 937–957 (LESIHMYIALVKVFNTYIRRY) the chain is on the cytoplasmic side. The helical transmembrane segment at 958 to 978 (ILKFCIVGWGVPAAIVGIVLA) threads the bilayer. The Extracellular portion of the chain corresponds to 979–1013 (VSKDSYGKNYYGKGKDGQGTSEFCWILNPVVFYVT). The helical transmembrane segment at 1014 to 1034 (CVAYFSIIFLMNVAMFIVVMI) threads the bilayer. The Cytoplasmic segment spans residues 1035-1057 (QICGRNGKRSNRTLREDILRNLR). A helical transmembrane segment spans residues 1058–1080 (SVVSLTFLLGMTWGFAFFAWGPV). Topologically, residues 1081–1083 (SLA) are extracellular. A helical transmembrane segment spans residues 1084 to 1106 (FMYLFTIFNSLQGLFIFVFHCAL). Residue Asn1092 participates in 17alpha-hydroxyprogesterone binding. Residues 1107–1185 (KENVQKQWRR…RHSNADSTLQ (79 aa)) lie on the Cytoplasmic side of the membrane. A disordered region spans residues 1138–1160 (NTKKVSSDNLGKSLSSSSFGSTT). Over residues 1144–1158 (SDNLGKSLSSSSFGS) the composition is skewed to low complexity.

It belongs to the G-protein coupled receptor 2 family. Adhesion G-protein coupled receptor (ADGR) subfamily. Autoproteolytically processed at the GPS region of the GAIN-B domain; this cleavage modulates receptor activity. As to expression, expressed in Schwann cells of the posterior lateral line nerve and in brain.

The protein resides in the cell membrane. Its activity is regulated as follows. Forms a heterodimer of 2 chains generated by proteolytic processing that remain associated through non-covalent interactions mediated by the GAIN-B domain. In the inactivated receptor, the Stachel sequence (also named stalk) is embedded in the GAIN-B domain, where it adopts a beta-strand conformation. On activation, the Stachel moves into the 7 transmembrane region and adopts a twisted hook-shaped configuration that forms contacts within the receptor, leading to coupling of a G-alpha protein, which activates signaling. The cleaved GAIN-B and N-terminal domains can then dissociate from the rest of the receptor. Functionally, adhesion G-protein coupled receptor (aGPCR) for steroid hormones, such as progesterone and 17alpha-hydroxyprogesterone (17OHP). Ligand binding causes a conformation change that triggers signaling via guanine nucleotide-binding proteins (G proteins) and modulates the activity of downstream effectors, such as adenylate cyclase. Adgrg6 is coupled to G(i) G alpha proteins and mediates inhibition of adenylate cyclase. Also able to couple to G(q) G proteins. Involved in myelination of the peripheral nervous system: required for differentiation of promyelinating Schwann cells and for normal myelination of axons. G-protein coupled receptor activity can also be activated by type IV collagen, a major constituent of the basement membrane. Also plays a role inner ear development. This chain is Adhesion G-protein coupled receptor G6 (adgrg6), found in Danio rerio (Zebrafish).